The primary structure comprises 87 residues: Beta-toxin Cn4 (87 aa).

Positions 1–19 (MNSLLMITACLALVGTVWA) are cleaved as a signal peptide. In terms of domain architecture, LCN-type CS-alpha/beta spans 20–85 (KEGYLVNSYT…VWPLKNKTCN (66 aa)). 4 disulfide bridges follow: Cys31/Cys84, Cys35/Cys60, Cys44/Cys65, and Cys48/Cys67. The residue at position 85 (Asn85) is an Asparagine amide.

Belongs to the long (4 C-C) scorpion toxin superfamily. Sodium channel inhibitor family. Beta subfamily. In terms of tissue distribution, expressed by the venom gland.

The protein localises to the secreted. Its function is as follows. Beta toxins bind voltage-independently at site-4 of sodium channels (Nav) and shift the voltage of activation toward more negative potentials thereby affecting sodium channel activation and promoting spontaneous and repetitive firing. This toxin affects the activation mechanism of sodium channels of squid axon. It also competes with Cn2 in rat brain synaptosomes. Is lethal to mice. This Centruroides noxius (Mexican scorpion) protein is Beta-toxin Cn4.